The sequence spans 428 residues: Glutamate-1-semialdehyde 2,1-aminomutase (428 aa).

The residue at position 267 (K267) is an N6-(pyridoxal phosphate)lysine.

Belongs to the class-III pyridoxal-phosphate-dependent aminotransferase family. HemL subfamily. In terms of assembly, homodimer. The cofactor is pyridoxal 5'-phosphate.

It is found in the cytoplasm. It carries out the reaction (S)-4-amino-5-oxopentanoate = 5-aminolevulinate. It functions in the pathway porphyrin-containing compound metabolism; protoporphyrin-IX biosynthesis; 5-aminolevulinate from L-glutamyl-tRNA(Glu): step 2/2. This Pelobacter propionicus (strain DSM 2379 / NBRC 103807 / OttBd1) protein is Glutamate-1-semialdehyde 2,1-aminomutase.